A 426-amino-acid polypeptide reads, in one-letter code: Cell cycle checkpoint control protein RAD9B (426 aa).

Ser-359 is modified (phosphoserine).

It belongs to the rad9 family. In terms of assembly, interacts with HUS1, HUS1B, RAD1, RAD9A and RAD17. In terms of tissue distribution, expressed in testis and skeletal muscle.

The protein is Cell cycle checkpoint control protein RAD9B (RAD9B) of Homo sapiens (Human).